The following is a 777-amino-acid chain: Aconitate hydratase, mitochondrial (777 aa).

Residues Gln-96 and 189-191 (DSH) each bind substrate. [4Fe-4S] cluster-binding residues include Cys-383, Cys-446, and Cys-449. Substrate-binding positions include Arg-472, Arg-477, Arg-605, and 668-669 (SR).

The protein belongs to the aconitase/IPM isomerase family. As to quaternary structure, monomer. [4Fe-4S] cluster serves as cofactor.

The protein localises to the mitochondrion. The enzyme catalyses citrate = D-threo-isocitrate. Its pathway is carbohydrate metabolism; tricarboxylic acid cycle; isocitrate from oxaloacetate: step 2/2. Its function is as follows. Catalyzes the isomerization of citrate to isocitrate via cis-aconitate, a step in the citric acid cycle. This is Aconitate hydratase, mitochondrial (ACO1) from Candida albicans (strain SC5314 / ATCC MYA-2876) (Yeast).